The following is a 32-amino-acid chain: Ribulose bisphosphate carboxylase/oxygenase activase, chloroplastic (32 aa).

Positions 13–32 (FGALREGPPTFEQPAMTIEK) are disordered.

This sequence belongs to the RuBisCO activase family.

The protein localises to the plastid. It is found in the chloroplast stroma. Functionally, activation of RuBisCO (ribulose-1,5-bisphosphate carboxylase/oxygenase; EC 4.1.1.39) involves the ATP-dependent carboxylation of the epsilon-amino group of lysine leading to a carbamate structure. This is Ribulose bisphosphate carboxylase/oxygenase activase, chloroplastic from Populus euphratica (Euphrates poplar).